A 252-amino-acid chain; its full sequence is Putative endonuclease C1F12.06c (252 aa).

The Mg(2+) site is built by aspartate 43 and aspartate 114.

It belongs to the endonuclease V family.

The protein localises to the cytoplasm. It is found in the nucleus. The polypeptide is Putative endonuclease C1F12.06c (Schizosaccharomyces pombe (strain 972 / ATCC 24843) (Fission yeast)).